A 635-amino-acid polypeptide reads, in one-letter code: DNA-directed RNA polymerase subunit gamma (635 aa).

4 residues coordinate Zn(2+): Cys74, Cys76, Cys89, and Cys92. Mg(2+)-binding residues include Asp471, Asp473, and Asp475.

The protein belongs to the RNA polymerase beta' chain family. RpoC1 subfamily. In cyanobacteria the RNAP catalytic core is composed of 2 alpha, 1 beta, 1 beta', 1 gamma and 1 omega subunit. When a sigma factor is associated with the core the holoenzyme is formed, which can initiate transcription. It depends on Mg(2+) as a cofactor. Zn(2+) serves as cofactor.

It catalyses the reaction RNA(n) + a ribonucleoside 5'-triphosphate = RNA(n+1) + diphosphate. DNA-dependent RNA polymerase catalyzes the transcription of DNA into RNA using the four ribonucleoside triphosphates as substrates. The sequence is that of DNA-directed RNA polymerase subunit gamma from Prochlorococcus marinus (strain NATL1A).